The following is a 550-amino-acid chain: Glucose-6-phosphate isomerase (550 aa).

Residue Glu356 is the Proton donor of the active site. Catalysis depends on residues His387 and Lys515.

Belongs to the GPI family.

The protein localises to the cytoplasm. It carries out the reaction alpha-D-glucose 6-phosphate = beta-D-fructose 6-phosphate. The protein operates within carbohydrate biosynthesis; gluconeogenesis. It participates in carbohydrate degradation; glycolysis; D-glyceraldehyde 3-phosphate and glycerone phosphate from D-glucose: step 2/4. Its function is as follows. Catalyzes the reversible isomerization of glucose-6-phosphate to fructose-6-phosphate. This is Glucose-6-phosphate isomerase from Aliivibrio salmonicida (strain LFI1238) (Vibrio salmonicida (strain LFI1238)).